Reading from the N-terminus, the 209-residue chain is MKIQSIFAASFCLLSSISAHAAIQLTVPDEVELILVDNQEVKLESSFFSTTSTLDLENGKHQIVFRYNPVFKQGKDNIIVSSDIIVSTFSAEDKEISFKFPTYNSPEKAKAFNRDLNWELIDKNNNSIPFAQSQLIYNGMQVGRNIQFEVAKFNTTEHPAAFKEGMLTVTHKEIKNEQGENTAEQMLHYWYEKADQATKERFLKSITNK.

The first 21 residues, 1–21 (MKIQSIFAASFCLLSSISAHA), serve as a signal peptide directing secretion.

Belongs to the UPF0319 family.

The sequence is that of UPF0319 protein VFMJ11_1730 from Aliivibrio fischeri (strain MJ11) (Vibrio fischeri).